Consider the following 188-residue polypeptide: Ribosome maturation factor RimM (188 aa).

The 74-residue stretch at 96–169 folds into the PRC barrel domain; the sequence is DDEFYYADLE…TLLIDPLAAG (74 aa).

It belongs to the RimM family. As to quaternary structure, binds ribosomal protein uS19.

The protein resides in the cytoplasm. In terms of biological role, an accessory protein needed during the final step in the assembly of 30S ribosomal subunit, possibly for assembly of the head region. Essential for efficient processing of 16S rRNA. May be needed both before and after RbfA during the maturation of 16S rRNA. It has affinity for free ribosomal 30S subunits but not for 70S ribosomes. This is Ribosome maturation factor RimM from Rhizobium etli (strain ATCC 51251 / DSM 11541 / JCM 21823 / NBRC 15573 / CFN 42).